The following is a 191-amino-acid chain: Small ribosomal subunit protein uS11m (191 aa).

The segment at 37–62 (PRLEDSAARQNTEREAAPSRFSLYPP) is disordered. Residues 38-53 (RLEDSAARQNTEREAA) show a composition bias toward basic and acidic residues.

This sequence belongs to the universal ribosomal protein uS11 family. As to quaternary structure, component of the mitochondrial ribosome small subunit (28S) which comprises a 12S rRNA and about 30 distinct proteins.

Its subcellular location is the mitochondrion. In Mus musculus (Mouse), this protein is Small ribosomal subunit protein uS11m (Mrps11).